Consider the following 312-residue polypeptide: Probable deoxyhypusine synthase (312 aa).

The Nucleophile role is filled by K285.

It belongs to the deoxyhypusine synthase family. The cofactor is NAD(+).

It carries out the reaction [eIF5A protein]-L-lysine + spermidine = [eIF5A protein]-deoxyhypusine + propane-1,3-diamine. The protein operates within protein modification; eIF5A hypusination. In terms of biological role, catalyzes the NAD-dependent oxidative cleavage of spermidine and the subsequent transfer of the butylamine moiety of spermidine to the epsilon-amino group of a specific lysine residue of the eIF-5A precursor protein to form the intermediate deoxyhypusine residue. The protein is Probable deoxyhypusine synthase of Saccharolobus islandicus (strain Y.N.15.51 / Yellowstone #2) (Sulfolobus islandicus).